Reading from the N-terminus, the 119-residue chain is uncharacterized protein (119 aa).

4 consecutive transmembrane segments (helical) span residues 3–23, 29–49, 58–78, and 87–107; these read WVFLCLAILFEVAGTVSMKLS, LIPSLLLIFFYGGSLFFLTLT, AYAVWSGMGIVLITVVGFLFF, and VISIGLIIAGVVSLNLIEHVA.

Belongs to the drug/metabolite transporter (DMT) superfamily. Small multidrug resistance (SMR) (TC 2.A.7.1) family.

It is found in the cell membrane. This is an uncharacterized protein from Bacillus subtilis (strain 168).